Consider the following 329-residue polypeptide: DNA-directed RNA polymerase subunit alpha (329 aa).

The interval 1 to 235 is alpha N-terminal domain (alpha-NTD); the sequence is MQGSVTEFLK…EQLEAFVDLR (235 aa). The interval 249-329 is alpha C-terminal domain (alpha-CTD); the sequence is FDPILLRPVD…NWPPASIADE (81 aa).

This sequence belongs to the RNA polymerase alpha chain family. In terms of assembly, homodimer. The RNAP catalytic core consists of 2 alpha, 1 beta, 1 beta' and 1 omega subunit. When a sigma factor is associated with the core the holoenzyme is formed, which can initiate transcription.

It carries out the reaction RNA(n) + a ribonucleoside 5'-triphosphate = RNA(n+1) + diphosphate. DNA-dependent RNA polymerase catalyzes the transcription of DNA into RNA using the four ribonucleoside triphosphates as substrates. The chain is DNA-directed RNA polymerase subunit alpha from Photorhabdus laumondii subsp. laumondii (strain DSM 15139 / CIP 105565 / TT01) (Photorhabdus luminescens subsp. laumondii).